Consider the following 624-residue polypeptide: MKGQETRGFQSEVKQLLHLMIHSLYSNKEIFLRELISNASDAADKLRFRALSSPDLYEGDGDLRVRVSFDKDKRTLTIADNGIGMTRDEVIDHLGTIAKSGTKAFLESMGSDQAKDSQLIGQFGVGFYSAFIVADKVTVRTRAAGVSADEAVFWESEGEGEYTVADISKADRGTEITLHLREGEDEFLNDWRVRSIISKYSDHIALPVEIETREEKDGETIVSWEKINKAQALWTRSKGEVSDDEYKAFYKHIAHDFTDPLTWSHNRVEGKQEYTSLLYIPSQAPWDMWNRDHKHGLKLYVQRVFIMDDAEQFMPNYLRFVRGLIDSNDLPLNVSREILQDSSITRNLRSALTKRVLQMLEKLAKDDAEKYQTFWKQFGLVLKEGPAEDSANQEAIAKLLRFASTHTDSAAQTVSLADYVSRMKEGQEKIYYITADSYAAAKSSPHLELLRKKGIEVLLLSDRIDEWMMSYLTEFDGKAFQSVAKADESLEKLADEVDESAKEAEKALEPFVERVKTLLGDRVKEVRLTHRLTDTPAIVTTDNDEMSTQMAKLFAAAGQAVPEVKYIFELNPDHQLVKRTADTQDEAQFKEWVELLLDQALFAERGTLEDPNQFIRRMNQLLVS.

The segment at 1–336 is a; substrate-binding; it reads MKGQETRGFQ…SNDLPLNVSR (336 aa). The tract at residues 337–552 is b; that stretch reads EILQDSSITR…NDEMSTQMAK (216 aa). A c region spans residues 553-624; it reads LFAAAGQAVP…IRRMNQLLVS (72 aa).

This sequence belongs to the heat shock protein 90 family. Homodimer.

The protein resides in the cytoplasm. Molecular chaperone. Has ATPase activity. The chain is Chaperone protein HtpG from Cronobacter sakazakii (strain ATCC BAA-894) (Enterobacter sakazakii).